Here is a 941-residue protein sequence, read N- to C-terminus: Zinc finger protein 507 (941 aa).

Residue Ser-95 is modified to Phosphoserine. C2H2-type zinc fingers lie at residues 122-144 (YQCS…VKQH) and 152-175 (LMCS…VSEH). A compositionally biased stretch (basic and acidic residues) spans 165–177 (QELEAHVVSEHEN). Residues 165 to 198 (QELEAHVVSEHENSASSQARSSPSGQGATERKSE) are disordered. A compositionally biased stretch (low complexity) spans 178–192 (SASSQARSSPSGQGA). A C2H2-type 3 zinc finger spans residues 237-259 (YRCLFCSYTCGQQRMLKTHAWKH). Residue Ser-415 is modified to Phosphoserine. Positions 455–477 (ELSKGLAPDENAPPGRRRTNSES) are disordered. 5 consecutive C2H2-type zinc fingers follow at residues 630 to 652 (YRCR…LRVH), 658 to 680 (YQCP…MINH), 686 to 709 (HQCK…REQH), 746 to 768 (YRCD…RRVH), and 774 to 796 (YRCS…MWKH). Residues 823–856 (GKSRGKPLLTSSEERTGPTTGSPENLVSSSELTS) form a disordered region. The segment covering 839 to 856 (GPTTGSPENLVSSSELTS) has biased composition (polar residues). Residues 899–921 (FCCCICGFESTSKESLLDHMKEH) form a C2H2-type 9 zinc finger.

The protein belongs to the krueppel C2H2-type zinc-finger protein family.

The protein localises to the nucleus. Its function is as follows. May be involved in transcriptional regulation. In Mus musculus (Mouse), this protein is Zinc finger protein 507 (Znf507).